A 166-amino-acid chain; its full sequence is Arginine repressor (166 aa).

This sequence belongs to the ArgR family.

Its subcellular location is the cytoplasm. The protein operates within amino-acid biosynthesis; L-arginine biosynthesis [regulation]. Its function is as follows. Regulates arginine biosynthesis genes. The chain is Arginine repressor from Mycobacterium ulcerans (strain Agy99).